Consider the following 375-residue polypeptide: MKLTKTALCTALFATFTFSANAQTYPDLPVGIKGGTGALIGDTVYVGLGSGGDKFYTLDLKDPSAQWKEIATFPGGERNQPVAAAVDGKLYVFGGLQKNEKGELQLVNDAYRYNPSDNTWMKLPTRSPRGLVGSSGASHGDKVYILGGSNLSIFNGFFQDNVAAGEDKGKKDEIVAAYFDQRPEDYFFTTELLSYEPSTNKWRNEGRIPFSGRAGAAFTIQGNDLVVVNGEIKPGLRTAETHQGKFTAKGVQWKNLPDLPAPKGKSQDGLAGALAGYSNGYYLVTGGANFPGSIKQFKEGKLHAHKGLSKAWHNEVYTLNNGKWSIVGELPMNIGYGFSVSYNNKVLLIGGETDGGKALTSVKAISYDGKKLTVE.

The first 22 residues, 1–22 (MKLTKTALCTALFATFTFSANA), serve as a signal peptide directing secretion. 7 Kelch repeats span residues 43 to 87 (TVYV…AAVD), 89 to 140 (KLYV…ASHG), 142 to 176 (KVYI…EIVA), 177 to 222 (AYFD…TIQG), 225 to 273 (LVVV…LAGA), 295 to 344 (KQFK…SYNN), and 346 to 375 (VLLI…LTVE). Glutamate 231 serves as the catalytic Proton acceptor.

It belongs to the NanM family. As to quaternary structure, homodimer.

Its subcellular location is the periplasm. The enzyme catalyses N-acetyl-alpha-neuraminate = N-acetyl-beta-neuraminate. Its function is as follows. Converts alpha-N-acetylneuranimic acid (Neu5Ac) to the beta-anomer, accelerating the equilibrium between the alpha- and beta-anomers. Probably facilitates sialidase-negative bacteria to compete successfully for limited amounts of extracellular Neu5Ac, which is likely taken up in the beta-anomer. In addition, the rapid removal of sialic acid from solution might be advantageous to the bacterium to damp down host responses. In Haemophilus influenzae (strain 86-028NP), this protein is N-acetylneuraminate epimerase.